A 484-amino-acid chain; its full sequence is Aldehyde dehydrogenase family 3 member H1 (484 aa).

196–201 (GSSKIG) serves as a coordination point for NAD(+). The active-site Proton acceptor is the Glu-218. Residue Cys-253 is the Nucleophile of the active site.

It belongs to the aldehyde dehydrogenase family. As to quaternary structure, homodimer and homomultimer. As to expression, isoform alpha is expressed in expanded leaves and flowers. Detected in seedlings. Isoform beta is mainly expressed in flowers. Detected in leaves and seedlings.

The catalysed reaction is an aldehyde + NAD(+) + H2O = a carboxylate + NADH + 2 H(+). With respect to regulation, thiol-based regulation. Inactivation after dimerization under oxidizing conditions. In terms of biological role, involved in oxidative stress tolerance by detoxifying reactive aldehydes derived from lipid peroxidation. Medium- to long-chain saturated aldehydes are preferred substrates, while the short-chain aldehyde propanal is a weak substrate. Is strictely NAD(+) specific. The chain is Aldehyde dehydrogenase family 3 member H1 (ALDH3H1) from Arabidopsis thaliana (Mouse-ear cress).